The primary structure comprises 164 residues: Lipoprotein signal peptidase (164 aa).

The next 4 helical transmembrane spans lie at 6–26 (LGIL…LWLL), 39–59 (VTSF…GWFA), 65–85 (GQIL…IWMA), and 88–108 (TTKL…GNAI). Catalysis depends on residues Asp-118 and Asp-140. The helical transmembrane segment at 141–161 (VAIVVGVVALLYDSLIGAPAV) threads the bilayer.

This sequence belongs to the peptidase A8 family.

Its subcellular location is the cell inner membrane. It carries out the reaction Release of signal peptides from bacterial membrane prolipoproteins. Hydrolyzes -Xaa-Yaa-Zaa-|-(S,diacylglyceryl)Cys-, in which Xaa is hydrophobic (preferably Leu), and Yaa (Ala or Ser) and Zaa (Gly or Ala) have small, neutral side chains.. It participates in protein modification; lipoprotein biosynthesis (signal peptide cleavage). This protein specifically catalyzes the removal of signal peptides from prolipoproteins. The sequence is that of Lipoprotein signal peptidase from Rhodopseudomonas palustris (strain TIE-1).